The primary structure comprises 380 residues: Shedu protein SduA (380 aa).

Its function is as follows. Only component of antiviral defense system Shedu. Expression of Shedu in B.subtilis (strain BEST7003) confers resistance to phages phi105, phi29, rho14 and to a lesser extent to SPP1. May be an endonuclease. The chain is Shedu protein SduA from Bacillus cereus (strain B4264).